A 179-amino-acid polypeptide reads, in one-letter code: Translationally-controlled tumor protein homolog (179 aa).

Residues 1 to 179 enclose the TCTP domain; sequence MIIYKDIISG…WKHGLEEMKV (179 aa).

Belongs to the TCTP family.

Its subcellular location is the cytoplasm. The protein localises to the cytoskeleton. Its function is as follows. Involved in protein synthesis. Involved in microtubule stabilization. Involved in osmoadaptation. The polypeptide is Translationally-controlled tumor protein homolog (Emericella nidulans (strain FGSC A4 / ATCC 38163 / CBS 112.46 / NRRL 194 / M139) (Aspergillus nidulans)).